The chain runs to 317 residues: Protein-methionine-sulfoxide reductase catalytic subunit MsrP (317 aa).

The tat-type signal signal peptide spans 1 to 40; the sequence is MNKFTKTDVTPEKLFIQRRKIIQGMSVLSAAAAFPNLAAA. Mo-molybdopterin is bound by residues asparagine 72, 75–76, cysteine 129, threonine 164, asparagine 216, arginine 221, and 232–234; these read YE and SIK.

It belongs to the MsrP family. In terms of assembly, heterodimer of a catalytic subunit (MsrP) and a heme-binding subunit (MsrQ). The cofactor is Mo-molybdopterin. Predicted to be exported by the Tat system. The position of the signal peptide cleavage has not been experimentally proven.

Its subcellular location is the periplasm. It catalyses the reaction L-methionyl-[protein] + a quinone + H2O = L-methionyl-(S)-S-oxide-[protein] + a quinol. The catalysed reaction is L-methionyl-[protein] + a quinone + H2O = L-methionyl-(R)-S-oxide-[protein] + a quinol. In terms of biological role, part of the MsrPQ system that repairs oxidized periplasmic proteins containing methionine sulfoxide residues (Met-O), using respiratory chain electrons. Thus protects these proteins from oxidative-stress damage caused by reactive species of oxygen and chlorine generated by the host defense mechanisms. MsrPQ is essential for the maintenance of envelope integrity under bleach stress, rescuing a wide series of structurally unrelated periplasmic proteins from methionine oxidation. The catalytic subunit MsrP is non-stereospecific, being able to reduce both (R-) and (S-) diastereoisomers of methionine sulfoxide. This is Protein-methionine-sulfoxide reductase catalytic subunit MsrP from Actinobacillus succinogenes (strain ATCC 55618 / DSM 22257 / CCUG 43843 / 130Z).